The primary structure comprises 249 residues: MEMKQINETTLKIMITMEDLEEHGMELKDFLIPQEKTEEFFYTVMDELDLPDNFKNSGMLSFRVTPRKDRVDVFVNKSDLKEALDFNDLSDMEDYSGLSPEEFLKALEDNFMDKGDIEAHHKLEEHDKTLKEVDETMTEPAKEVAEETIREDYTHYVLAFSDFDQVVTFAQGLKNVSVEGSEFYKLGDVYYMTILLYLADEPDYYANNMYARFLEYANVADRTRPYLQEHATILMEEDALPVLQATKWS.

It belongs to the MecA family. As to quaternary structure, homodimer.

Enables the recognition and targeting of unfolded and aggregated proteins to the ClpC protease or to other proteins involved in proteolysis. This is Adapter protein MecA from Streptococcus thermophilus (strain CNRZ 1066).